Consider the following 144-residue polypeptide: 3-dehydroquinate dehydratase (144 aa).

Catalysis depends on tyrosine 24, which acts as the Proton acceptor. Substrate-binding residues include asparagine 76, histidine 82, and aspartate 89. Histidine 102 functions as the Proton donor in the catalytic mechanism. Substrate is bound by residues 103–104 (LS) and arginine 113.

The protein belongs to the type-II 3-dehydroquinase family. Homododecamer.

The catalysed reaction is 3-dehydroquinate = 3-dehydroshikimate + H2O. Its pathway is metabolic intermediate biosynthesis; chorismate biosynthesis; chorismate from D-erythrose 4-phosphate and phosphoenolpyruvate: step 3/7. Functionally, catalyzes a trans-dehydration via an enolate intermediate. The sequence is that of 3-dehydroquinate dehydratase from Bordetella avium (strain 197N).